Reading from the N-terminus, the 750-residue chain is 5-methyltetrahydropteroyltriglutamate--homocysteine methyltransferase (750 aa).

5-methyltetrahydropteroyltri-L-glutamate is bound by residues arginine 15–lysine 18 and lysine 114. L-homocysteine-binding positions include isoleucine 425 to serine 427 and glutamate 478. L-methionine contacts are provided by residues isoleucine 425–serine 427 and glutamate 478. Tryptophan 555 contributes to the 5-methyltetrahydropteroyltri-L-glutamate binding site. L-homocysteine is bound at residue aspartate 593. L-methionine is bound at residue aspartate 593. Residue glutamate 599 participates in 5-methyltetrahydropteroyltri-L-glutamate binding. Zn(2+)-binding residues include histidine 636, cysteine 638, and glutamate 660. The active-site Proton donor is histidine 689. Cysteine 721 provides a ligand contact to Zn(2+).

It belongs to the vitamin-B12 independent methionine synthase family. Requires Zn(2+) as cofactor.

It carries out the reaction 5-methyltetrahydropteroyltri-L-glutamate + L-homocysteine = tetrahydropteroyltri-L-glutamate + L-methionine. It participates in amino-acid biosynthesis; L-methionine biosynthesis via de novo pathway; L-methionine from L-homocysteine (MetE route): step 1/1. In terms of biological role, catalyzes the transfer of a methyl group from 5-methyltetrahydrofolate to homocysteine resulting in methionine formation. The protein is 5-methyltetrahydropteroyltriglutamate--homocysteine methyltransferase of Streptococcus gordonii (strain Challis / ATCC 35105 / BCRC 15272 / CH1 / DL1 / V288).